Consider the following 338-residue polypeptide: UbiA prenyltransferase domain-containing protein 1 (338 aa).

The tract at residues 1–39 (MAAVQAPGEKINIQAGETTQVGDTDQQRNDWPEEDRLPE) is disordered. At Ala2 the chain carries N-acetylalanine. Polar residues predominate over residues 15 to 24 (AGETTQVGDT). Basic and acidic residues predominate over residues 25–39 (DQQRNDWPEEDRLPE). Transmembrane regions (helical) follow at residues 83-103 (LLLG…LVNT), 134-154 (FGVF…YLST), 160-180 (LALI…GIGF), 188-208 (LVIL…VQVG), 209-229 (SLAI…EAIL), 245-267 (IVTL…LLFL), 277-297 (THCS…FSLE), and 315-335 (LNLL…AGSL).

Belongs to the UbiA prenyltransferase family. In terms of assembly, interacts with HMGCR and SOAT1.

It is found in the endoplasmic reticulum membrane. Its subcellular location is the golgi apparatus membrane. The protein localises to the mitochondrion membrane. It carries out the reaction menadiol + (2E,6E,10E)-geranylgeranyl diphosphate = menaquinol-4 + diphosphate. The catalysed reaction is all-trans-decaprenyl diphosphate + 4-hydroxybenzoate = 4-hydroxy-3-(all-trans-decaprenyl)benzoate + diphosphate. Its pathway is quinol/quinone metabolism; menaquinone biosynthesis. It functions in the pathway cofactor biosynthesis; ubiquinone biosynthesis. Prenyltransferase that mediates the formation of menaquinone-4 (MK-4) and coenzyme Q10. MK-4 is a vitamin K2 isoform required for endothelial cell development. Mediates the conversion of phylloquinone (PK) into MK-4, probably by cleaving the side chain of phylloquinone (PK) to release 2-methyl-1,4-naphthoquinone (menadione; K3) and then prenylating it with geranylgeranyl pyrophosphate (GGPP) to form MK-4. Also plays a role in cardiovascular development independently of MK-4 biosynthesis, by acting as a coenzyme Q10 biosynthetic enzyme: coenzyme Q10, also named ubiquinone, plays an important antioxidant role in the cardiovascular system. Mediates biosynthesis of coenzyme Q10 in the Golgi membrane, leading to protect cardiovascular tissues from NOS3/eNOS-dependent oxidative stress. This is UbiA prenyltransferase domain-containing protein 1 (Ubiad1) from Rattus norvegicus (Rat).